Consider the following 152-residue polypeptide: Cytochrome c-type biogenesis protein CcmE (152 aa).

Residues 1 to 9 lie on the Cytoplasmic side of the membrane; sequence MRGLKKQRR. Residues 10–30 traverse the membrane as a helical; Signal-anchor for type II membrane protein segment; sequence IQILIVAAVALTLSSVLIGYA. Over 31–152 the chain is Periplasmic; it reads LRDGINFFRP…PDGYARDGDS (122 aa). Positions 123 and 127 each coordinate heme.

This sequence belongs to the CcmE/CycJ family.

Its subcellular location is the cell inner membrane. In terms of biological role, heme chaperone required for the biogenesis of c-type cytochromes. Transiently binds heme delivered by CcmC and transfers the heme to apo-cytochromes in a process facilitated by CcmF and CcmH. This is Cytochrome c-type biogenesis protein CcmE from Jannaschia sp. (strain CCS1).